Reading from the N-terminus, the 80-residue chain is Ubiquitin-like protein NEDD8-like protein 2 (80 aa).

The protein belongs to the ubiquitin family.

The chain is Ubiquitin-like protein NEDD8-like protein 2 (nedd8l2) from Dictyostelium discoideum (Social amoeba).